The chain runs to 196 residues: MKEKIPFYNEKEFHDMVKKTKKGTFSGWYIIDKDNNSVEFSGKFNRQFKLNKPVIPVNTEYVTRKEFNEYKNSNDQRLTKIETTLAAQGEQINKLTQTVEKQGEQINQLVQVVLLHGEQINKLTQTVEKQGEQIKELQIEQKAQGETLKLILQTLQKMSDRLDKMEVKMDKMEVKMDKMEVKMDKMEKRIDKLESK.

It belongs to the UPF0134 family.

This is UPF0134 protein MPN_501 from Mycoplasma pneumoniae (strain ATCC 29342 / M129 / Subtype 1) (Mycoplasmoides pneumoniae).